The chain runs to 241 residues: Zinc finger CCHC domain-containing protein 17 (241 aa).

Residues 16-88 (YTIFQGEVAM…DRIKVSLSMK (73 aa)) enclose the S1 motif domain. Phosphoserine is present on serine 114. A CCHC-type zinc finger spans residues 131-148 (TTCKKCGCKGHFAKDCFM). At lysine 144 the chain carries N6-acetyllysine. Residues 160-241 (EEEEEKEEAK…KKKHKKKHKE (82 aa)) are disordered. Residues 166 to 178 (EEAKAEGLEKPDP) are compositionally biased toward basic and acidic residues. The span at 182-198 (SSRKRKKEKKKKKHRDR) shows a compositional bias: basic residues. Serine 183 carries the phosphoserine modification. Over residues 211–225 (DTGKKARHSSKDSKA) the composition is skewed to basic and acidic residues. Over residues 226–241 (TKKKKKKKKHKKKHKE) the composition is skewed to basic residues.

As to quaternary structure, interacts with PNN. Associates with the 60S ribosomal subunit. Expressed in liver, brain, heart, kidney testis, stomach, small intestine, skin, thymus, uterus, placenta, spleen, lung and skeletal muscle.

The protein resides in the nucleus. It is found in the nucleolus. This is Zinc finger CCHC domain-containing protein 17 (Zcchc17) from Mus musculus (Mouse).